The primary structure comprises 385 residues: Multicilin (385 aa).

Residues 1-130 (MQACGGGAAG…TVDDLISDSS (130 aa)) are necessary and sufficient for its degradation during the cell cycle. Residues 86 to 111 (SSLLGSDAPPGGDLAASQNHSHQTEA) form a disordered region. The interval 131–385 (SMMSPTLASG…GGYKFRWVPS (255 aa)) is necessary and sufficient for proper nuclear localization. The necessary and sufficient for interaction with GMNN and sufficient for homodimerization stretch occupies residues 173-245 (PDVPPPEQYW…SVLDKLMITQ (73 aa)). Residues 179–227 (EQYWKEVADQNQRALGDALVENNQLHVTLTQKQEEIASLKERNVQLKEL) are a coiled coil. The disordered stretch occupies residues 294-319 (ALQSRDPKRPRLLPEPANTDTRPGNL).

It belongs to the geminin family. Heterodimer (via coiled-coil domain) with GMNN (via coiled-coil domain); targets GMNN to the nucleus. Can form homodimers (in vitro, via coiled-coil domain), but these are much less stable than the heterodimer formed with GMNN.

It localises to the nucleus. Transcription regulator specifically required for multiciliate cell differentiation. Acts in a multiprotein complex containing E2F4 and E2F5 that binds and activates genes required for centriole biogenesis. Required for the deuterosome-mediated acentriolar pathway. Plays a role in mitotic cell cycle progression by promoting cell cycle exit. Modulates GMNN activity by reducing its affinity for CDT1. The polypeptide is Multicilin (Homo sapiens (Human)).